We begin with the raw amino-acid sequence, 73 residues long: Arabinogalactan protein 16 (73 aa).

Positions 1-26 (MASRNSVTGFALFSFVFAVILSLAGA) are cleaved as a signal peptide. Pyrrolidone carboxylic acid is present on Q27. A 4-hydroxyproline mark is found at P31, P33, and P35. P31, P33, and P35 each carry an O-linked (Ara...) hydroxyproline glycan. The GPI-anchor amidated serine moiety is linked to residue S37. Positions 38 to 73 (DGTSIDQGIAYLLMVVALVLTYLIHPLDASSSYSFF) are cleaved as a propeptide — removed in mature form.

The protein belongs to the AG-peptide AGP family. Contains 4-hydroxyproline; hydroxylated on Pro-31, Pro-33 and Pro-35. Post-translationally, O-glycosylated on hydroxyprolines; noncontiguous hydroxylproline residues are glycosylated with arabinogalactan. In terms of tissue distribution, predominantly expressed in flowers.

It is found in the cell membrane. In terms of biological role, proteoglycan that seems to be implicated in diverse developmental roles such as differentiation, cell-cell recognition, embryogenesis and programmed cell death. In Arabidopsis thaliana (Mouse-ear cress), this protein is Arabinogalactan protein 16.